The chain runs to 403 residues: Phosphoglycerate kinase (403 aa).

Residues 22-24 (DLN), Arg37, 60-63 (HLGN), Arg119, and Arg152 each bind substrate. Residues Lys202, Glu325, and 355–358 (GGDT) each bind ATP.

It belongs to the phosphoglycerate kinase family. In terms of assembly, monomer.

The protein localises to the cytoplasm. It carries out the reaction (2R)-3-phosphoglycerate + ATP = (2R)-3-phospho-glyceroyl phosphate + ADP. The protein operates within carbohydrate degradation; glycolysis; pyruvate from D-glyceraldehyde 3-phosphate: step 2/5. This chain is Phosphoglycerate kinase, found in Orientia tsutsugamushi (strain Boryong) (Rickettsia tsutsugamushi).